The sequence spans 258 residues: Indole-3-glycerol phosphate synthase (258 aa).

Belongs to the TrpC family.

It catalyses the reaction 1-(2-carboxyphenylamino)-1-deoxy-D-ribulose 5-phosphate + H(+) = (1S,2R)-1-C-(indol-3-yl)glycerol 3-phosphate + CO2 + H2O. The protein operates within amino-acid biosynthesis; L-tryptophan biosynthesis; L-tryptophan from chorismate: step 4/5. In Endomicrobium trichonymphae, this protein is Indole-3-glycerol phosphate synthase.